We begin with the raw amino-acid sequence, 350 residues long: UDP-glucose 4-epimerase 2 (350 aa).

NAD(+) contacts are provided by residues 12 to 14 (GYI), 33 to 37 (DNYDN), 63 to 64 (DL), Phe85, and Lys89. Residue 129-131 (SAT) participates in substrate binding. Residue Tyr153 is the Proton acceptor of the active site. Residues Lys157 and Tyr181 each contribute to the NAD(+) site. Residues 181 to 183 (YFN), 202 to 204 (NNL), 220 to 222 (TVF), Arg235, and 297 to 300 (RPGD) contribute to the substrate site.

Belongs to the NAD(P)-dependent epimerase/dehydratase family. In terms of assembly, forms homodimers and heterodimers. Requires NAD(+) as cofactor. In terms of tissue distribution, widely expressed. Most highly expressed in stems and flowers.

The protein localises to the cytoplasm. The enzyme catalyses UDP-alpha-D-glucose = UDP-alpha-D-galactose. It participates in carbohydrate metabolism; galactose metabolism. With respect to regulation, enhanced activity by NaCl. Enhanced activity by NAD(+). Strongly inhibited by UDP. Its function is as follows. Catalyzes the interconversion between UDP-glucose and UDP-galactose. Cooperates with UGE3 in pollen development and with UGE4 in cell wall carbohydrate biosynthesis and growth. The protein is UDP-glucose 4-epimerase 2 of Arabidopsis thaliana (Mouse-ear cress).